A 150-amino-acid chain; its full sequence is Large ribosomal subunit protein uL13 (150 aa).

The protein belongs to the universal ribosomal protein uL13 family. Part of the 50S ribosomal subunit.

Functionally, this protein is one of the early assembly proteins of the 50S ribosomal subunit, although it is not seen to bind rRNA by itself. It is important during the early stages of 50S assembly. In Sulfurihydrogenibium sp. (strain YO3AOP1), this protein is Large ribosomal subunit protein uL13.